The sequence spans 294 residues: N-acetylmuramic acid 6-phosphate etherase (294 aa).

One can recognise an SIS domain in the interval 54 to 217; sequence VIQSFEEEGR…STASMIGVGK (164 aa). The active-site Proton donor is the E82. E113 is a catalytic residue.

It belongs to the GCKR-like family. MurNAc-6-P etherase subfamily. As to quaternary structure, homodimer.

The enzyme catalyses N-acetyl-D-muramate 6-phosphate + H2O = N-acetyl-D-glucosamine 6-phosphate + (R)-lactate. It participates in amino-sugar metabolism; N-acetylmuramate degradation. Functionally, specifically catalyzes the cleavage of the D-lactyl ether substituent of MurNAc 6-phosphate, producing GlcNAc 6-phosphate and D-lactate. This chain is N-acetylmuramic acid 6-phosphate etherase, found in Bacillus thuringiensis subsp. konkukian (strain 97-27).